A 414-amino-acid polypeptide reads, in one-letter code: Nuclear localization sequence-binding protein (414 aa).

Disordered stretches follow at residues 1–172 (MAKT…TIFV), 244–264 (STSK…TPSE), and 336–414 (RPVR…KTFD). The segment covering 10–26 (NKKEVKASKQAKEEKAK) has biased composition (basic and acidic residues). 2 stretches are compositionally biased toward low complexity: residues 27 to 44 (AVSS…SSSE) and 54 to 73 (ESSS…SSSD). A compositionally biased stretch (basic and acidic residues) spans 78-87 (AETKKEESKD). A phosphoserine mark is found at Ser-93, Ser-95, Ser-96, Ser-97, Ser-116, Ser-127, Ser-129, Ser-131, and Ser-143. The span at 96–105 (SSDEEEEEEK) shows a compositional bias: acidic residues. The segment covering 106–117 (EETKKEESKESS) has biased composition (basic and acidic residues). A compositionally biased stretch (low complexity) spans 118-128 (SSDSSSSSSSD). Residues 134-144 (EESNDKKRKSE) show a composition bias toward basic and acidic residues. 2 RRM domains span residues 168 to 246 (ATIF…MSTS) and 267 to 345 (DTLF…FSSP). The segment covering 351–386 (GGRGGSRGFGGRGGGRGGNRGFGGRGGARGGRGGFR) has biased composition (gly residues). The residue at position 353 (Arg-353) is an Omega-N-methylarginine. Residues 353–384 (RGGSRGFGGRGGGRGGNRGFGGRGGARGGRGG) form an RGG-box region. Asymmetric dimethylarginine; by HMT1; alternate is present on residues Arg-357, Arg-362, and Arg-366. Arg-357, Arg-362, and Arg-366 each carry omega-N-methylarginine; by HMT1; alternate. The segment at 366 to 384 (RGGNRGFGGRGGARGGRGG) is RNA-binding RGG-box. Arg-370 carries the omega-N-methylarginine modification. Asymmetric dimethylarginine; by HMT1; alternate is present on residues Arg-375, Arg-379, and Arg-382. 3 positions are modified to omega-N-methylarginine; by HMT1; alternate: Arg-375, Arg-379, and Arg-382. Arg-386 carries the omega-N-methylarginine modification.

This sequence belongs to the RRM GAR family. Methylated by HMT1, forming asymmetric dimethylarginines (DMA) within a domain referred to as an RGG box, made up of repeated Gly-Gly dipeptides interspersed with Arg and aromatic residues. Post-translationally, pyrophosphorylated by 5-diphosphoinositol pentakisphosphate (5-IP7). Serine pyrophosphorylation is achieved by Mg(2+)-dependent, but enzyme independent transfer of a beta-phosphate from a inositol pyrophosphate to a pre-phosphorylated serine residue.

The protein localises to the nucleus. Its subcellular location is the nucleolus. Its function is as follows. Involved in pre-rRNA processing. Specifically binds nuclear localization sequences. Candidate for a receptor at the nucleus that may be involved in both RNA and protein transport. Binds telomeric sequences of the type (TG[1-3])n in vitro. This chain is Nuclear localization sequence-binding protein, found in Saccharomyces cerevisiae (strain ATCC 204508 / S288c) (Baker's yeast).